A 90-amino-acid chain; its full sequence is Serine-rich and transmembrane domain-containing 2 (90 aa).

Asn-11 carries an N-linked (GlcNAc...) asparagine glycan. A helical membrane pass occupies residues 38 to 58 (YVGLFLSLLAILLILLFTMLL). The interval 69–90 (SDSTESVPQFTDVEMQSRIPTP) is disordered.

The protein localises to the membrane. The protein is Serine-rich and transmembrane domain-containing 2 of Homo sapiens (Human).